Consider the following 290-residue polypeptide: Probable ATP-dependent kinase TDA10 (290 aa).

38 to 45 (GPQGSGKS) serves as a coordination point for ATP.

It belongs to the GLYK kinase family.

The protein resides in the cytoplasm. The protein localises to the nucleus. Its function is as follows. ATP-dependent kinase whose specificity is not yet known. The chain is Probable ATP-dependent kinase TDA10 (TDA10) from Saccharomyces cerevisiae (strain ATCC 204508 / S288c) (Baker's yeast).